The chain runs to 237 residues: MALNFKADTSALSRLPTKRKLAGQKAHLEMYRKLAKYSSVGHLLKFLAIDHPCPTRCQLKIFFEVCLGNRIADCVILLSCGETRLCYIIELKTCMSDSPSMYNETRLCQRSQGLCQLSDALRFISFNAPAGRQKWHLVPHLIFKSQRGLKTIYTETPQFPTNIIHSSPDKLASFFFSRADREVSEKVHAPDAGGQEKMAAKRRLLVPKSKALRARRQRLIERNKKACFKSQEKRARR.

This sequence belongs to the herpesviridae UL24 family.

This Equus caballus (Horse) protein is Protein UL24 homolog (20).